The following is a 428-amino-acid chain: Light-independent protochlorophyllide reductase subunit N (428 aa).

[4Fe-4S] cluster is bound by residues cysteine 29, cysteine 54, and cysteine 115.

This sequence belongs to the BchN/ChlN family. As to quaternary structure, protochlorophyllide reductase is composed of three subunits; BchL, BchN and BchB. Forms a heterotetramer of two BchB and two BchN subunits. Requires [4Fe-4S] cluster as cofactor.

It catalyses the reaction chlorophyllide a + oxidized 2[4Fe-4S]-[ferredoxin] + 2 ADP + 2 phosphate = protochlorophyllide a + reduced 2[4Fe-4S]-[ferredoxin] + 2 ATP + 2 H2O. It participates in porphyrin-containing compound metabolism; bacteriochlorophyll biosynthesis (light-independent). Component of the dark-operative protochlorophyllide reductase (DPOR) that uses Mg-ATP and reduced ferredoxin to reduce ring D of protochlorophyllide (Pchlide) to form chlorophyllide a (Chlide). This reaction is light-independent. The NB-protein (BchN-BchB) is the catalytic component of the complex. This is Light-independent protochlorophyllide reductase subunit N from Cereibacter sphaeroides (strain KD131 / KCTC 12085) (Rhodobacter sphaeroides).